We begin with the raw amino-acid sequence, 505 residues long: ATP synthase subunit alpha (505 aa).

170–177 (GDRQTGKS) contributes to the ATP binding site.

This sequence belongs to the ATPase alpha/beta chains family. In terms of assembly, F-type ATPases have 2 components, CF(1) - the catalytic core - and CF(0) - the membrane proton channel. CF(1) has five subunits: alpha(3), beta(3), gamma(1), delta(1), epsilon(1). CF(0) has four main subunits: a(1), b(1), b'(1) and c(9-12).

Its subcellular location is the cellular thylakoid membrane. It catalyses the reaction ATP + H2O + 4 H(+)(in) = ADP + phosphate + 5 H(+)(out). Its function is as follows. Produces ATP from ADP in the presence of a proton gradient across the membrane. The alpha chain is a regulatory subunit. The sequence is that of ATP synthase subunit alpha from Prochlorococcus marinus (strain MIT 9215).